Consider the following 332-residue polypeptide: 1-acyl-sn-glycerol-3-phosphate acyltransferase CHLREDRAFT_174358 (332 aa).

The chain crosses the membrane as a helical span at residues 96–116; it reads FLLSLPLFVTMMVMAPLVLAF. The short motif at 163 to 168 is the HXXXXD motif element; it reads HQSFLD. The helical transmembrane segment at 185–205 threads the bilayer; sequence TSNFLIPIIGWSMFLTGHVMI. An EGTR motif motif is present at residues 235-238; sequence EGTR.

Belongs to the 1-acyl-sn-glycerol-3-phosphate acyltransferase family.

The protein resides in the membrane. It catalyses the reaction a 1-acyl-sn-glycero-3-phosphate + an acyl-CoA = a 1,2-diacyl-sn-glycero-3-phosphate + CoA. It functions in the pathway phospholipid metabolism; CDP-diacylglycerol biosynthesis; CDP-diacylglycerol from sn-glycerol 3-phosphate: step 2/3. Its function is as follows. Converts lysophosphatidic acid (LPA) into phosphatidic acid by incorporating an acyl moiety at the sn-2 position of the glycerol backbone. The chain is 1-acyl-sn-glycerol-3-phosphate acyltransferase CHLREDRAFT_174358 from Chlamydomonas reinhardtii (Chlamydomonas smithii).